A 248-amino-acid chain; its full sequence is 3-deoxy-manno-octulosonate cytidylyltransferase (248 aa).

This sequence belongs to the KdsB family.

The protein localises to the cytoplasm. It carries out the reaction 3-deoxy-alpha-D-manno-oct-2-ulosonate + CTP = CMP-3-deoxy-beta-D-manno-octulosonate + diphosphate. Its pathway is nucleotide-sugar biosynthesis; CMP-3-deoxy-D-manno-octulosonate biosynthesis; CMP-3-deoxy-D-manno-octulosonate from 3-deoxy-D-manno-octulosonate and CTP: step 1/1. The protein operates within bacterial outer membrane biogenesis; lipopolysaccharide biosynthesis. Activates KDO (a required 8-carbon sugar) for incorporation into bacterial lipopolysaccharide in Gram-negative bacteria. In Salmonella arizonae (strain ATCC BAA-731 / CDC346-86 / RSK2980), this protein is 3-deoxy-manno-octulosonate cytidylyltransferase.